The sequence spans 101 residues: Apolipoprotein C-II (101 aa).

An N-terminal signal peptide occupies residues 1 to 22 (MGTRCLLVLLLVLLVLRCDVQG). Residues 23-28 (DDMARQ) constitute a propeptide, removed in mature form. Residues 66–74 (AVDEKIRDM) form a lipid binding region. Positions 78 to 101 (STAAVRIYTGILTDQILSMLSGDS) are lipoprotein lipase cofactor.

The protein belongs to the apolipoprotein C2 family. In terms of processing, proapolipoprotein C-II is synthesized as a sialic acid containing glycoprotein which is subsequently desialylated prior to its proteolytic processing. Proapolipoprotein C-II, the major form found in plasma undergoes proteolytic cleavage of its N-terminal hexapeptide to generate the mature form apolipoprotein C-II, which occurs as the minor form in plasma.

Its subcellular location is the secreted. Functionally, component of chylomicrons, very low-density lipoproteins (VLDL), low-density lipoproteins (LDL), and high-density lipoproteins (HDL) in plasma. Plays an important role in lipoprotein metabolism as an activator of lipoprotein lipase, the enzyme which hydrolyzes the triacylglycerols on chylomicrons and VLDL. This is Apolipoprotein C-II (APOC2) from Acinonyx jubatus (Cheetah).